Here is a 264-residue protein sequence, read N- to C-terminus: tRNA pseudouridine synthase A (264 aa).

Aspartate 51 functions as the Nucleophile in the catalytic mechanism. Tyrosine 109 serves as a coordination point for substrate.

The protein belongs to the tRNA pseudouridine synthase TruA family. In terms of assembly, homodimer.

It catalyses the reaction uridine(38/39/40) in tRNA = pseudouridine(38/39/40) in tRNA. In terms of biological role, formation of pseudouridine at positions 38, 39 and 40 in the anticodon stem and loop of transfer RNAs. This Vibrio vulnificus (strain CMCP6) protein is tRNA pseudouridine synthase A.